A 249-amino-acid chain; its full sequence is Proteasome activator complex subunit 1 (249 aa).

Positions 60-102 are disordered; that stretch reads PLDIPVPDPVKEKEKEERKKQQEKEDKDEKKKGEDEDKGPPCG. Residues 68–98 show a composition bias toward basic and acidic residues; the sequence is PVKEKEKEERKKQQEKEDKDEKKKGEDEDKG.

This sequence belongs to the PA28 family. Heterodimer of PSME1 and PSME2, which forms a hexameric ring. PSME1 can form homoheptamers.

Implicated in immunoproteasome assembly and required for efficient antigen processing. The PA28 activator complex enhances the generation of class I binding peptides by altering the cleavage pattern of the proteasome. The chain is Proteasome activator complex subunit 1 (PSME1) from Homo sapiens (Human).